We begin with the raw amino-acid sequence, 511 residues long: Cobyric acid synthase (511 aa).

The GATase cobBQ-type domain maps to 251 to 443 (LLDIAIICLP…IHGIFDNDVF (193 aa)). Catalysis depends on Cys332, which acts as the Nucleophile. Residue His435 is part of the active site.

It belongs to the CobB/CobQ family. CobQ subfamily.

It functions in the pathway cofactor biosynthesis; adenosylcobalamin biosynthesis. Functionally, catalyzes amidations at positions B, D, E, and G on adenosylcobyrinic A,C-diamide. NH(2) groups are provided by glutamine, and one molecule of ATP is hydrogenolyzed for each amidation. This chain is Cobyric acid synthase, found in Listeria monocytogenes serotype 4a (strain HCC23).